We begin with the raw amino-acid sequence, 213 residues long: Orotate phosphoribosyltransferase (213 aa).

Lys26 is a binding site for 5-phospho-alpha-D-ribose 1-diphosphate. Residue 34–35 participates in orotate binding; sequence FF. 5-phospho-alpha-D-ribose 1-diphosphate contacts are provided by residues 72–73, Arg99, Lys100, Lys103, His105, and 124–132; these read YK and DDVITAGTA. Thr128 and Arg156 together coordinate orotate.

It belongs to the purine/pyrimidine phosphoribosyltransferase family. PyrE subfamily. In terms of assembly, homodimer. Mg(2+) serves as cofactor.

It catalyses the reaction orotidine 5'-phosphate + diphosphate = orotate + 5-phospho-alpha-D-ribose 1-diphosphate. It functions in the pathway pyrimidine metabolism; UMP biosynthesis via de novo pathway; UMP from orotate: step 1/2. In terms of biological role, catalyzes the transfer of a ribosyl phosphate group from 5-phosphoribose 1-diphosphate to orotate, leading to the formation of orotidine monophosphate (OMP). The protein is Orotate phosphoribosyltransferase of Edwardsiella ictaluri (strain 93-146).